The sequence spans 722 residues: Zinc finger protein 600 (722 aa).

Residues 162–184 (FQCNESGKAFNCSSLLRKHQIPH) form a C2H2-type 1; degenerate zinc finger. 9 C2H2-type zinc fingers span residues 190 to 212 (YKCDVCGKLFNHKQYLTCHCRCH), 218 to 240 (YKCNECGKSFSQVSSLTCHRRLH), 246 to 268 (HKCNECGKIFGQNSALVIHKAIH), 274 to 296 (YKCNECDKAFNQQSNLARHRRIH), 302 to 324 (YKCEECDKVFSRKSTLESHKRIH), 330 to 352 (YKCKVCDTAFTWNSQLARHKRIH), 358 to 380 (YKCNECGKTFSHKSSLVCHHRLH), 386 to 408 (YKCKVCDKAFAWNSHLVRHTRIH), and 414 to 436 (YKCNECGKTFGQNSDLLIHKSIH). The C2H2-type 11; degenerate zinc-finger motif lies at 442–464 (YKYEECEKVFSCGSTLETHKIIH). 9 C2H2-type zinc fingers span residues 470-492 (YKCKVCDKAFACHSYLAKHTRIH), 498-520 (YKCNECSKTFRLRSYLASHRRVH), 526-548 (YKCNECSKTFSQRSYLHCHRRLH), 554-576 (YKCNECGKTFSHKPSLVHHRRLH), 582-604 (YKCTVCDKAFVRNSYLARHTRIH), 610-632 (YKCNECGKAFNQQSQLSLHHRIH), 638-660 (YKCETCDKVFSRKSHLKRHRRIH), 666-688 (YKCKVCDKTFGSDSHLKQHTGLH), and 694-716 (YKCNECGKAFSKQSTLIHHQAVH).

This sequence belongs to the krueppel C2H2-type zinc-finger protein family.

The protein resides in the nucleus. May be involved in transcriptional regulation. This Homo sapiens (Human) protein is Zinc finger protein 600 (ZNF600).